We begin with the raw amino-acid sequence, 392 residues long: Iripin-1 (392 aa).

The signal sequence occupies residues methionine 1–alanine 16. N-linked (GlcNAc...) asparagine glycosylation is found at asparagine 104, asparagine 196, and asparagine 265.

The protein belongs to the serpin family. Interacts with human KLKB1. Interacts with human ST14. Interacts with human PLG (plasmin). Highly expressed in salivary gland. Expressed in midgut and ovary.

The protein localises to the secreted. Functionally, serine protease inhibitor that modulates blood feeding of ticks on vertebrate species. Modestly inhibits human trypsin, plasma kallikrein (KLKB1), matriptase (ST14) and plasmin (PLG) via a classic serpin inhibitory mechanism. Modestly reduces enzymatic activity of human alpha-chymotrypsin, coagulation factor Xa (F10), factor XIIa (F12), cathepsin G (CTSG), tPA/tissue-type plasminogen activator (PLAT) and uPA/urokinase-type plasminogen activator (PLAU). Probably acts as a substrate rather than an inhibitor for the human neutrophil elastase (ELANE) and thus reduces its enzymatic activity in in vitro assays. Decreases expression of adhesion molecules VCAM1 and CD99 on the surface of human cells. Increases the production of chemokines for neutrophils and monocytes, such as KC/CXCL1, MIP-2/CXCL2 and MIP-1/CCL2, and anti-inflammatory cytokine IL10 in mouse inflammation models. Reduces the recruitment of mouse neutrophils and monocytes to the site of inflammation. Decreases expression of CXCR2 on the surface of mouse neutrophils. Increases expression of integrin ITGAM/ITGB2 on the surface of mouse neutrophils. The protein is Iripin-1 of Ixodes ricinus (Common tick).